The primary structure comprises 240 residues: Cell division control protein 14 (240 aa).

In terms of assembly, interacts with sid1.

Its subcellular location is the cytoplasm. The protein localises to the cytoskeleton. The protein resides in the microtubule organizing center. It is found in the spindle pole body. Its function is as follows. Has a role in the septation initiation network (SIN) required for cytokinesis. This is Cell division control protein 14 (cdc14) from Schizosaccharomyces pombe (strain 972 / ATCC 24843) (Fission yeast).